Reading from the N-terminus, the 696-residue chain is D-(-)-3-hydroxybutyrate oligomer hydrolase (696 aa).

A signal peptide spans 1 to 26; that stretch reads MDTHGWGSRILVGAALAALTMLGACN. The active-site Charge relay system is the Ser309.

It belongs to the D-(-)-3-hydroxybutyrate oligomer hydrolase family.

The protein localises to the secreted. The catalysed reaction is (3R)-hydroxybutanoate dimer + H2O = 2 (R)-3-hydroxybutanoate + H(+). It participates in lipid metabolism; butanoate metabolism. In terms of biological role, participates in the degradation of poly-3-hydroxybutyrate (PHB). It works downstream of poly(3-hydroxybutyrate) depolymerase, hydrolyzing D(-)-3-hydroxybutyrate oligomers of various length (3HB-oligomers) into 3HB-monomers. This Burkholderia vietnamiensis (strain G4 / LMG 22486) (Burkholderia cepacia (strain R1808)) protein is D-(-)-3-hydroxybutyrate oligomer hydrolase.